We begin with the raw amino-acid sequence, 98 residues long: Large ribosomal subunit protein bL28 (98 aa).

Belongs to the bacterial ribosomal protein bL28 family.

The polypeptide is Large ribosomal subunit protein bL28 (Chelativorans sp. (strain BNC1)).